The sequence spans 124 residues: Small ribosomal subunit protein uS13 (124 aa).

Residues 95–124 (GLPVRGQRTKTNARTRKGPKRTIAGKKKAR) are disordered.

It belongs to the universal ribosomal protein uS13 family. Part of the 30S ribosomal subunit. Forms a loose heterodimer with protein S19. Forms two bridges to the 50S subunit in the 70S ribosome.

Functionally, located at the top of the head of the 30S subunit, it contacts several helices of the 16S rRNA. In the 70S ribosome it contacts the 23S rRNA (bridge B1a) and protein L5 of the 50S subunit (bridge B1b), connecting the 2 subunits; these bridges are implicated in subunit movement. Contacts the tRNAs in the A and P-sites. This is Small ribosomal subunit protein uS13 from Mycobacterium marinum (strain ATCC BAA-535 / M).